The primary structure comprises 363 residues: Chorismate synthase (363 aa).

2 residues coordinate NADP(+): R48 and R54. Residues 125–127, 237–238, G277, 292–296, and R318 contribute to the FMN site; these read RSS, NA, and KPTSS.

This sequence belongs to the chorismate synthase family. As to quaternary structure, homotetramer. FMNH2 is required as a cofactor.

The catalysed reaction is 5-O-(1-carboxyvinyl)-3-phosphoshikimate = chorismate + phosphate. The protein operates within metabolic intermediate biosynthesis; chorismate biosynthesis; chorismate from D-erythrose 4-phosphate and phosphoenolpyruvate: step 7/7. Its function is as follows. Catalyzes the anti-1,4-elimination of the C-3 phosphate and the C-6 proR hydrogen from 5-enolpyruvylshikimate-3-phosphate (EPSP) to yield chorismate, which is the branch point compound that serves as the starting substrate for the three terminal pathways of aromatic amino acid biosynthesis. This reaction introduces a second double bond into the aromatic ring system. This chain is Chorismate synthase, found in Pseudomonas putida (strain ATCC 700007 / DSM 6899 / JCM 31910 / BCRC 17059 / LMG 24140 / F1).